A 494-amino-acid chain; its full sequence is Cobyrinate a,c-diamide synthase (494 aa).

One can recognise a GATase cobBQ-type domain in the interval Lys-270–Glu-475. Cys-352 acts as the Nucleophile in catalysis.

It belongs to the CobB/CbiA family. It depends on Mg(2+) as a cofactor.

The catalysed reaction is cob(II)yrinate + 2 L-glutamine + 2 ATP + 2 H2O = cob(II)yrinate a,c diamide + 2 L-glutamate + 2 ADP + 2 phosphate + 2 H(+). It carries out the reaction Ni-sirohydrochlorin + 2 L-glutamine + 2 ATP + 2 H2O = Ni-sirohydrochlorin a,c-diamide + 2 L-glutamate + 2 ADP + 2 phosphate + 2 H(+). It functions in the pathway cofactor biosynthesis; adenosylcobalamin biosynthesis; cob(II)yrinate a,c-diamide from sirohydrochlorin (anaerobic route): step 10/10. In terms of biological role, catalyzes the ATP-dependent amidation of the two carboxylate groups at positions a and c of cobyrinate, using either L-glutamine or ammonia as the nitrogen source (Potential). Involved in the biosynthesis of the unique nickel-containing tetrapyrrole coenzyme F430, the prosthetic group of methyl-coenzyme M reductase (MCR), which plays a key role in methanogenesis and anaerobic methane oxidation. Catalyzes the ATP-dependent amidation of the two carboxylate groups at positions a and c of Ni-sirohydrochlorin, using L-glutamine or ammonia as the nitrogen source. Also able to use sirohydrochlorin as substrate, but only produces a monoamide species in a much slower reaction. Unable to use other metallosirohydrochlorins such as sirohaem and Co-sirohydrochlorin. The sequence is that of Cobyrinate a,c-diamide synthase from Methanosarcina barkeri (strain Fusaro / DSM 804).